Consider the following 345-residue polypeptide: Probable translocation protein y4yO (345 aa).

The segment covering 1 to 22 has biased composition (basic and acidic residues); sequence MSDTSEEKSHGATPKKLSDARK. The tract at residues 1-25 is disordered; that stretch reads MSDTSEEKSHGATPKKLSDARKRGQ. The next 3 helical transmembrane spans lie at 87–107, 151–171, and 189–209; these read LATV…AALL, VLVL…TMVY, and QLIG…LLLQ.

The protein belongs to the type III secretion exporter family.

It is found in the cell membrane. In terms of biological role, could be involved in the secretion of an unknown factor. The protein is Probable translocation protein y4yO of Sinorhizobium fredii (strain NBRC 101917 / NGR234).